A 593-amino-acid chain; its full sequence is Autophagy-related protein 22-2 (593 aa).

The helical transmembrane segment at 42–62 (YGVAAEVFAVCGVGSFLPLTL) threads the bilayer. Asn-90 carries an N-linked (GlcNAc...) asparagine glycan. The next 3 membrane-spanning stretches (helical) occupy residues 112-132 (SFAM…LVSF), 159-179 (LFML…VIGV), and 181-201 (CLGS…ANDP). The disordered stretch occupies residues 228 to 261 (SWTDEEDTGDHAGPAGSKKAVEPEKASSSTSPEL). The next 4 helical transmembrane spans lie at 271-291 (GVGL…LLLF), 305-325 (LPLR…TVVC), 377-397 (VVVF…VSGT), and 415-435 (LLSI…PIVA). Asn-443 is a glycosylation site (N-linked (GlcNAc...) asparagine). The next 4 helical transmembrane spans lie at 448-468 (LCIA…IPFI), 480-500 (WEIF…ASYC), 525-545 (KGSS…TGSV), and 548-568 (GFIF…LVNA).

The protein belongs to the ATG22 family.

It localises to the vacuole membrane. Vacuolar effluxer which mediate the efflux of amino acids resulting from autophagic degradation. The release of autophagic amino acids allows the maintenance of protein synthesis and viability during nitrogen starvation. This chain is Autophagy-related protein 22-2 (atg22-2), found in Emericella nidulans (strain FGSC A4 / ATCC 38163 / CBS 112.46 / NRRL 194 / M139) (Aspergillus nidulans).